The sequence spans 299 residues: J domain-containing protein CG6693 (299 aa).

Residues 15 to 82 (DVYKLMELAR…QKRALYDEQG (68 aa)) enclose the J domain. A Phosphoserine modification is found at Ser239. Residues 266–299 (FEKKKKKSKKPAAKQETKPKLNGVKAGRVEKGKN) form a disordered region. A compositionally biased stretch (basic residues) spans 268–277 (KKKKKSKKPA).

This chain is J domain-containing protein CG6693, found in Drosophila melanogaster (Fruit fly).